Consider the following 214-residue polypeptide: 3,4-dihydroxy-2-butanone 4-phosphate synthase (214 aa).

Residues 37 to 38 (RE), aspartate 42, 150 to 154 (RRGHT), and glutamate 174 each bind D-ribulose 5-phosphate. Residue glutamate 38 participates in Mg(2+) binding. Histidine 153 contributes to the Mg(2+) binding site.

Belongs to the DHBP synthase family. As to quaternary structure, homodimer. Mg(2+) is required as a cofactor. Requires Mn(2+) as cofactor.

The enzyme catalyses D-ribulose 5-phosphate = (2S)-2-hydroxy-3-oxobutyl phosphate + formate + H(+). The protein operates within cofactor biosynthesis; riboflavin biosynthesis; 2-hydroxy-3-oxobutyl phosphate from D-ribulose 5-phosphate: step 1/1. Functionally, catalyzes the conversion of D-ribulose 5-phosphate to formate and 3,4-dihydroxy-2-butanone 4-phosphate. This is 3,4-dihydroxy-2-butanone 4-phosphate synthase from Pasteurella multocida (strain Pm70).